The chain runs to 1790 residues: Intracellular protein transport protein USO1 (1790 aa).

The interval 1 to 724 (MDIIQGLIQQ…LSHDPDEEPI (724 aa)) is globular head. 10 ARM repeats span residues 45-89 (AFSR…LFIR), 127-170 (QFSL…AVMA), 173-213 (PLKA…MAVV), 215-260 (DSPH…NILK), 261-312 (YNTS…VSLT), 314-362 (EPGN…NMVR), 363-429 (SNEH…LKAY), 431-512 (MDNF…PFKL), 543-584 (GNDL…LIYW), and 586-630 (FGDF…LGVA). The tract at residues 452 to 484 (TNNVGDNAKENGGSNKSDKESDSDKDTDGKDGT) is disordered. A charged (hyper-hydrophilic) region spans residues 465 to 487 (SNKSDKESDSDKDTDGKDGTEYE). A compositionally biased stretch (basic and acidic residues) spans 467-484 (KSDKESDSDKDTDGKDGT). Residues 725 to 1790 (NKISFEEVEK…EEDEEEGQVA (1066 aa)) are a coiled coil. The segment at 991–1790 (ESSIQLSNLQ…EEDEEEGQVA (800 aa)) is dispensable for the protein function. Disordered stretches follow at residues 1185 to 1221 (EITS…SNLK), 1326 to 1351 (KEKS…EEQL), 1485 to 1547 (GLKK…EDIK), 1645 to 1667 (QELD…EVRK), 1722 to 1742 (DNLK…SEID), and 1762 to 1790 (LKDL…GQVA). Residues 1194–1209 (ESIKKKNDELEGEVKA) show a composition bias toward basic and acidic residues. 4 stretches are compositionally biased toward basic and acidic residues: residues 1485-1512 (GLKK…KLES), 1519-1547 (TELK…EDIK), 1655-1667 (QKSE…EVRK), and 1722-1738 (DNLK…NEDR). Ser1770 carries the phosphoserine modification. The segment covering 1770-1790 (SSDEEDDEEDDEEDEEEGQVA) has biased composition (acidic residues).

Belongs to the VDP/USO1/EDE1 family. Homodimer. Dimerizes by parallel association of the tails, resulting in an elongated structure with two globular head domains side by side, and a long rod-like tail structure.

It localises to the cytoplasm. The protein localises to the cytoskeleton. Its subcellular location is the cytoplasmic vesicle membrane. The protein resides in the endoplasmic reticulum membrane. It is found in the golgi apparatus membrane. Functionally, required for protein transport from the ER to the Golgi complex. This chain is Intracellular protein transport protein USO1 (USO1), found in Saccharomyces cerevisiae (strain ATCC 204508 / S288c) (Baker's yeast).